Consider the following 360-residue polypeptide: Olfactory receptor 1L1 (360 aa).

At 1–75 the chain is on the extracellular side; the sequence is MERNHNPDNC…GLSSRPEDQK (75 aa). Asn-55 is a glycosylation site (N-linked (GlcNAc...) asparagine). Residues 76–99 form a helical membrane-spanning segment; that stretch reads PLFAVFLPIYLITVIGNLLIILAI. Residues 100–107 lie on the Cytoplasmic side of the membrane; the sequence is RSDTRLQT. The helical transmembrane segment at 108 to 129 threads the bilayer; the sequence is PMYFFLSILSFVDICYVTVIIP. Residues 130–150 lie on the Extracellular side of the membrane; the sequence is KMLVNFLSETKTISYSECLTQ. Cys-147 and Cys-239 form a disulfide bridge. Residues 151–170 traverse the membrane as a helical segment; the sequence is MYFFLAFGNTDSYLLAAMAI. Topologically, residues 171–189 are cytoplasmic; it reads DRYVAICNPFHYITIMSHR. Residues 190–208 form a helical membrane-spanning segment; that stretch reads CCVLLLVLSFCIPHFHSLL. Over 209-246 the chain is Extracellular; it reads HILLTNQLIFCASNVIHHFFCDDQPVLKLSCSSHFVKE. A helical transmembrane segment spans residues 247 to 269; that stretch reads ITVMTEGLAVIMTPFSCIIISYL. Topologically, residues 270-286 are cytoplasmic; that stretch reads RILITVLKIPSAAGKRK. A helical membrane pass occupies residues 287–309; it reads AFSTCGSHLTVVTLFYGSISYLY. Residues 310–321 lie on the Extracellular side of the membrane; it reads FQPLSNYTVKDQ. An N-linked (GlcNAc...) asparagine glycan is attached at Asn-315. Residues 322 to 341 traverse the membrane as a helical segment; sequence IATIIYTVLTPMLNPFIYSL. The Cytoplasmic portion of the chain corresponds to 342 to 360; it reads RNKDMKQGLAKLMHRMKCQ.

Belongs to the G-protein coupled receptor 1 family.

The protein resides in the cell membrane. In terms of biological role, odorant receptor. The polypeptide is Olfactory receptor 1L1 (OR1L1) (Homo sapiens (Human)).